We begin with the raw amino-acid sequence, 211 residues long: Thymidylate kinase (211 aa).

10–17 (GPDGAGKT) provides a ligand contact to ATP.

This sequence belongs to the thymidylate kinase family.

The enzyme catalyses dTMP + ATP = dTDP + ADP. Functionally, phosphorylation of dTMP to form dTDP in both de novo and salvage pathways of dTTP synthesis. The protein is Thymidylate kinase of Lactococcus lactis subsp. cremoris (strain MG1363).